The following is a 493-amino-acid chain: E3 ubiquitin-protein ligase Hakai (493 aa).

Disordered regions lie at residues 1–20 and 28–61; these read MDHNDNDLQGTNSSASLGGL and IKLISKQTNKTKPAPRAPRAMNRMPAKTQAGDEE. The span at 7 to 16 shows a compositional bias: polar residues; it reads DLQGTNSSAS. The RING-type zinc-finger motif lies at 109 to 149; that stretch reads CDKCGLPIKMYGRMIPCKHVFCYDCAILHEKKGDKMCPGCN. The HYB domain stretch occupies residues 148-206; it reads CNEPVQRIEQCVRGSLFMCSIVQGCKRTYLSQRDLQAHINHRHMRAGKPVTRPPLEPVH. The C2H2-type zinc-finger motif lies at 164 to 190; that stretch reads FMCSIVQGCKRTYLSQRDLQAHINHRH. Positions 253-493 are disordered; sequence YNQPHEDIRP…DQARYRPYYQ (241 aa). Composition is skewed to pro residues over residues 262-276, 342-352, 372-389, and 399-412; these read PPPAEMSMAPPPPRP, APPPPPPPPIS, APPPPMTSAPPPITPPPG, and MNHPPPGPPPPQHG. Polar residues predominate over residues 427-444; the sequence is NPNSLPQFSEDQGTLSPP. Pro residues predominate over residues 459–469; the sequence is PRGPPPPPRMQ. Low complexity predominate over residues 470–480; it reads GPPAQAPLAGP.

Belongs to the Hakai family. Homodimer. Interacts with tyrosine-phosphorylated SRC substrates. Component of the WMM complex, a N6-methyltransferase complex composed of a catalytic subcomplex, named MAC, and of an associated subcomplex, named MACOM. Component of the MACOM subcomplex.

It is found in the nucleus speckle. The protein localises to the nucleus. Its subcellular location is the nucleoplasm. The enzyme catalyses S-ubiquitinyl-[E2 ubiquitin-conjugating enzyme]-L-cysteine + [acceptor protein]-L-lysine = [E2 ubiquitin-conjugating enzyme]-L-cysteine + N(6)-ubiquitinyl-[acceptor protein]-L-lysine.. Its pathway is protein modification; protein ubiquitination. E3 ubiquitin-protein ligase that mediates ubiquitination of several tyrosine-phosphorylated Src substrates. Associated component of the WMM complex, a complex that mediates N6-methyladenosine (m6A) methylation of RNAs, a modification that plays a role in the efficiency of mRNA splicing and RNA processing. The chain is E3 ubiquitin-protein ligase Hakai from Gallus gallus (Chicken).